The primary structure comprises 149 residues: MRALIQRVSRAEVTVEGSSIGRIGPGLLVLVCAMRGDPEDAAEKLAARVAKLRIFRDEADKMNRSVQDIGGAVLVVSQFTLAADTRTGNRPGFSSAEAPERGEALYLRFAEALRALGLPVETGAFGADMKVSLVNDGPVTIWMDSADRA.

A Gly-cisPro motif, important for rejection of L-amino acids motif is present at residues 137–138 (GP).

Belongs to the DTD family. As to quaternary structure, homodimer.

The protein resides in the cytoplasm. It catalyses the reaction glycyl-tRNA(Ala) + H2O = tRNA(Ala) + glycine + H(+). It carries out the reaction a D-aminoacyl-tRNA + H2O = a tRNA + a D-alpha-amino acid + H(+). Functionally, an aminoacyl-tRNA editing enzyme that deacylates mischarged D-aminoacyl-tRNAs. Also deacylates mischarged glycyl-tRNA(Ala), protecting cells against glycine mischarging by AlaRS. Acts via tRNA-based rather than protein-based catalysis; rejects L-amino acids rather than detecting D-amino acids in the active site. By recycling D-aminoacyl-tRNA to D-amino acids and free tRNA molecules, this enzyme counteracts the toxicity associated with the formation of D-aminoacyl-tRNA entities in vivo and helps enforce protein L-homochirality. This chain is D-aminoacyl-tRNA deacylase, found in Paracoccus denitrificans (strain Pd 1222).